The following is a 1777-amino-acid chain: Non-reducing polyketide synthase nscA (1777 aa).

Residues 27–261 (DLFRRLDQHS…PLPVYDGLCH (235 aa)) form an N-terminal acylcarrier protein transacylase domain (SAT) region. The Ketosynthase family 3 (KS3) domain occupies 396–829 (SSKLAIVGMA…GGNTTLLLED (434 aa)). Residues C569, H704, and H747 each act as for beta-ketoacyl synthase activity in the active site. The malonyl-CoA:ACP transacylase (MAT) domain stretch occupies residues 934-1212 (AFTGQGAYYH…SAIPSCRRNE (279 aa)). Positions 1297-1616 (TSLVHQITAE…RLLMDRFFSP (320 aa)) are product template (PT) domain. Positions 1301–1437 (HQITAETVEA…ATIRFEDPEA (137 aa)) are N-terminal hotdog fold. A PKS/mFAS DH domain is found at 1301 to 1611 (HQITAETVEA…FRRVPRLLMD (311 aa)). The Proton acceptor; for dehydratase activity role is filled by H1333. Positions 1465-1611 (ASRLSKPLAY…FRRVPRLLMD (147 aa)) are C-terminal hotdog fold. Residue D1522 is the Proton donor; for dehydratase activity of the active site. The tract at residues 1674–1704 (LLATSSKSSTPKESPIVTPAESERAEPVDNS) is disordered. Positions 1677–1688 (TSSKSSTPKESP) are enriched in low complexity. In terms of domain architecture, Carrier spans 1700–1777 (PVDNSMTSQC…EMTAWIEEYC (78 aa)). At S1737 the chain carries O-(pantetheine 4'-phosphoryl)serine.

Requires pantetheine 4'-phosphate as cofactor.

It participates in secondary metabolite biosynthesis. Its function is as follows. Non-reducing polyketide synthase; part of the gene cluster that mediates the biosynthesis of neosartoricin B, a prenylated anthracenone that probably exhibits T-cell antiproliferative activity, suggestive of a physiological role as an immunosuppressive agent. The non-reducing polyketide synthase nscA probably synthesizes and cyclizes the decaketide backbone. The hydrolase nscB then mediates the product release through hydrolysis followed by spontaneous decarboxylation. The prenyltransferase nscD catalyzes the addition of the dimethylallyl group to the aromatic C5. The FAD-dependent monooxygenase nscC is then responsible for the stereospecific hydroxylation at C2. Neosartoricin B can be converted into two additional compounds neosartoricins C and D. Neosartoricin C is a spirocyclic compound that is cyclized through the attack of C3 hydroxyl on C14, followed by dehydration. On the other hand, neosartoricin D is a further cyclized compound in which attack of C2 on C14 in neosartoricin C results in the formation of the acetal-containing dioxabicyclo-octanone ring. Both of these compounds are novel and possibly represent related metabolites of the gene cluster. This is Non-reducing polyketide synthase nscA from Trichophyton equinum (strain ATCC MYA-4606 / CBS 127.97) (Horse ringworm fungus).